The chain runs to 105 residues: Sulfite reductase, dissimilatory-type subunit gamma (105 aa).

This sequence belongs to the DsrC/TusE family. In terms of assembly, heterohexamer of two alpha, two beta and two gamma subunits.

It is found in the cytoplasm. The catalysed reaction is [DsrC protein]-trisulfide + NAD(+) + 3 H2O = [DsrC protein]-dithiol + sulfite + NADH + 3 H(+). In terms of biological role, catalyzes the reduction of sulfite to sulfide. This is the terminal oxidation reaction in sulfate respiration, a process catalyzed by the sulfate-reducing bacteria. The protein is Sulfite reductase, dissimilatory-type subunit gamma (dsvC) of Nitratidesulfovibrio vulgaris (strain ATCC 29579 / DSM 644 / CCUG 34227 / NCIMB 8303 / VKM B-1760 / Hildenborough) (Desulfovibrio vulgaris).